Here is a 720-residue protein sequence, read N- to C-terminus: Proline-rich receptor-like protein kinase PERK12 (720 aa).

The disordered stretch occupies residues 1–240; sequence MSDLGESPSS…GNGDGGGGGG (240 aa). The Extracellular segment spans residues 1-246; it reads MSDLGESPSS…GGGGGYQGKT (246 aa). Positions 10-25 are enriched in pro residues; it reads SSPPAPPADTAPPPET. Over residues 26-35 the composition is skewed to low complexity; that stretch reads PSENSALPPV. Pro residues-rich tracts occupy residues 52–84 and 92–116; these read LSEP…PSDS and PSPP…PAPP. An N-linked (GlcNAc...) asparagine glycan is attached at asparagine 117. 2 stretches are compositionally biased toward pro residues: residues 123–138 and 147–207; these read NPPP…PSSP and PESP…PPKT. A helical membrane pass occupies residues 247-267; it reads MVGMAVAGFAIMALIGVVFLV. Topologically, residues 268 to 720 are cytoplasmic; it reads RRKKKRNIDS…ETRPFNNRRF (453 aa). Residues 300–349 form a disordered region; that stretch reads QDPGKGYSSGPNGSMYNNSQQQQSSMGNSYGTAGGGYPHHQMQSSGTPDS. The span at 311–330 shows a compositional bias: low complexity; sequence NGSMYNNSQQQQSSMGNSYG. The region spanning 371-624 is the Protein kinase domain; that stretch reads FARKNILGEG…EVFRMIETAA (254 aa). ATP contacts are provided by residues 377–385 and lysine 399; that span reads LGEGGFGCV. Tyrosine 444 carries the phosphotyrosine modification. The Proton acceptor role is filled by aspartate 495. Serine 528 carries the phosphoserine modification. 2 positions are modified to phosphothreonine: threonine 529 and threonine 534. Tyrosine 542 bears the Phosphotyrosine mark. Positions 698 to 720 are disordered; it reads SAKSSSDFSGNESETRPFNNRRF.

Belongs to the protein kinase superfamily. Ser/Thr protein kinase family. As to expression, mostly expressed in apical parts, including flower buds, and particularly in anthers. Also present in root hairs.

The protein localises to the cell membrane. It carries out the reaction L-seryl-[protein] + ATP = O-phospho-L-seryl-[protein] + ADP + H(+). The enzyme catalyses L-threonyl-[protein] + ATP = O-phospho-L-threonyl-[protein] + ADP + H(+). Functionally, regulates the auxin-related MAX (More Axillary Growth) pathway during the shoot branching. The sequence is that of Proline-rich receptor-like protein kinase PERK12 (PERK12) from Arabidopsis thaliana (Mouse-ear cress).